The chain runs to 198 residues: MYDYIKGQLTKITAKYIVVEANGLGYMINVANPYSFTDSVNQLVTIYLHQVIREDAHLLFGFHTEDEKDVFLKLISVSGIGPTTALAIVAVDDNEGLVNAIDNSDIKYLMKFPKIGKKTAQQMVLDLAGKFVEAPQETGHTKARSNKAGNTQLDEAIEALLALGYKAKELKKIRAFFEGTSETAEQYIKSALKLLMKG.

The segment at 1–63 (MYDYIKGQLT…EDAHLLFGFH (63 aa)) is domain I. The segment at 64–142 (TEDEKDVFLK…EAPQETGHTK (79 aa)) is domain II. Residues 143–147 (ARSNK) form a flexible linker region. The domain III stretch occupies residues 148 to 198 (AGNTQLDEAIEALLALGYKAKELKKIRAFFEGTSETAEQYIKSALKLLMKG).

Belongs to the RuvA family. In terms of assembly, homotetramer. Forms an RuvA(8)-RuvB(12)-Holliday junction (HJ) complex. HJ DNA is sandwiched between 2 RuvA tetramers; dsDNA enters through RuvA and exits via RuvB. An RuvB hexamer assembles on each DNA strand where it exits the tetramer. Each RuvB hexamer is contacted by two RuvA subunits (via domain III) on 2 adjacent RuvB subunits; this complex drives branch migration. In the full resolvosome a probable DNA-RuvA(4)-RuvB(12)-RuvC(2) complex forms which resolves the HJ.

It localises to the cytoplasm. The RuvA-RuvB-RuvC complex processes Holliday junction (HJ) DNA during genetic recombination and DNA repair, while the RuvA-RuvB complex plays an important role in the rescue of blocked DNA replication forks via replication fork reversal (RFR). RuvA specifically binds to HJ cruciform DNA, conferring on it an open structure. The RuvB hexamer acts as an ATP-dependent pump, pulling dsDNA into and through the RuvAB complex. HJ branch migration allows RuvC to scan DNA until it finds its consensus sequence, where it cleaves and resolves the cruciform DNA. This chain is Holliday junction branch migration complex subunit RuvA, found in Streptococcus pyogenes serotype M1.